Consider the following 537-residue polypeptide: MTVSAKNIPAPDLVPVRRALISVSDKTGIVDFARSLAAREVALASTGGTAALLARSGIGVMDVSQLTGFPEIMDGRVKTLHPAVHGGLLAIRDDPDHRSAMETHAIKPIDLVVINLYPFEDVRFGGGDYAATVENIDIGGPAMLRAAAKNHAYVAVVTDPADYARVLEALEKNDGALPYRLRQELAAKAYARTAAYDAAISQWFAESLAIAEPEWRSFGGRLAQVMRYGENPHQQAGFYATGEKRPGVATARQVQGKQLSYNNINDTDAAFELVCEFDPKKVAAVAIIKHANPCGVAEGTSLAEAYRKALACDPVSAFGGIVALNRILDAEAAEEIAKIFTEVIIAPDATEEAQAIIATKKNLRLLLTEGVADPRAPGLSAKTVAGGLLVQTRDNGVIDDLDLRVVTRRAPSEKEMANLKFAFRVAKHVKSNAIVYARDLATVGIGAGQMSRVDSARIAARKAEDAAAAAGGQPLTKGSVVASDAFFPFADGLLSAVEAGATAVIQPGGSMRDDEVIKAADEHGIAMVFTGMRHFRH.

Residues 8–158 enclose the MGS-like domain; the sequence is IPAPDLVPVR…KNHAYVAVVT (151 aa).

This sequence belongs to the PurH family.

It catalyses the reaction (6R)-10-formyltetrahydrofolate + 5-amino-1-(5-phospho-beta-D-ribosyl)imidazole-4-carboxamide = 5-formamido-1-(5-phospho-D-ribosyl)imidazole-4-carboxamide + (6S)-5,6,7,8-tetrahydrofolate. The enzyme catalyses IMP + H2O = 5-formamido-1-(5-phospho-D-ribosyl)imidazole-4-carboxamide. It participates in purine metabolism; IMP biosynthesis via de novo pathway; 5-formamido-1-(5-phospho-D-ribosyl)imidazole-4-carboxamide from 5-amino-1-(5-phospho-D-ribosyl)imidazole-4-carboxamide (10-formyl THF route): step 1/1. Its pathway is purine metabolism; IMP biosynthesis via de novo pathway; IMP from 5-formamido-1-(5-phospho-D-ribosyl)imidazole-4-carboxamide: step 1/1. This Chelativorans sp. (strain BNC1) protein is Bifunctional purine biosynthesis protein PurH.